The chain runs to 1208 residues: Period circadian protein (1208 aa).

Disordered regions lie at residues 1 to 171 (MEGG…AAQS) and 214 to 235 (GPGKVEPVPGVPGTAAAGTGQR). Residues 16–47 (SDSAYSNSCSNSQSQRSGSSKSRLSGSHSSGS) show a composition bias toward low complexity. Positions 66–79 (KRNKDKSRKKKKNK) match the Nuclear localization signal motif. A compositionally biased stretch (basic residues) spans 66–79 (KRNKDKSRKKKKNK). Composition is skewed to basic and acidic residues over residues 129–139 (QHGEDHSEPKA) and 147–164 (EGDRSGSESEAERVENAA). Over residues 217 to 232 (KVEPVPGVPGTAAAGT) the composition is skewed to low complexity. 2 consecutive PAS domains span residues 242–377 (ESFC…ATPI) and 395–501 (FAIR…RVFQ). 4 disordered regions span residues 636–747 (VTAP…SSNY), 802–821 (EYSGPGHGIKRGGSHSWEGE), 961–982 (TSPTRSPRMHKHPHKGGPEMPT), and 1076–1208 (VTTP…HGDG). Positions 679–697 (NFTTASNIHMSSVTNTSIA) are enriched in polar residues. Repeat copies occupy residues 698–699 (GT), 701–702 (GT), 703–704 (GT), 705–706 (GT), 707–708 (GT), 709–710 (GT), 711–712 (GT), 713–714 (GT), 715–716 (GT), 717–718 (GT), 719–720 (GT), 721–722 (GT), 723–724 (GT), 725–726 (GT), 727–728 (GT), 729–730 (GT), and 731–732 (GN). Residues 698-740 (GTGGTGTGTGTGTGTGTGTGTGTGTGTGTGTGTGNGTNSGTGT) are compositionally biased toward gly residues. The tract at residues 698 to 742 (GTGGTGTGTGTGTGTGTGTGTGTGTGTGTGTGTGNGTNSGTGTGS) is 21 X 2 AA approximate tandem repeats of G-[TN]. The stretch at 734–735 (TN) is one 18; approximate repeat. 2 consecutive repeat copies span residues 737-738 (GT) and 739-740 (GT). The 21; approximate repeat unit spans residues 741-742 (GS). Low complexity predominate over residues 1076–1092 (VTTPSQVQRSSSQSASV). Positions 1127-1138 (LPCSSSNPANNK) are enriched in polar residues. A compositionally biased stretch (low complexity) spans 1142 to 1161 (DSNGNSDDMDGSSFSSFYSS). Residues 1193–1208 (KIMEHPEEDQTQHGDG) show a composition bias toward basic and acidic residues.

In terms of assembly, forms a heterodimer with timeless (TIM); the complex then translocates into the nucleus. In terms of processing, phosphorylated with a circadian rhythmicity, probably by the double-time protein (dbt). Phosphorylation could be implicated in the stability of per monomer and in the formation of heterodimer per-tim.

Its subcellular location is the nucleus. It is found in the cytoplasm. The protein localises to the perinuclear region. Functionally, essential for biological clock functions. Determines the period length of circadian and ultradian rhythms; an increase in PER dosage leads to shortened circadian rhythms and a decrease leads to lengthened circadian rhythms. Essential for the circadian rhythmicity of locomotor activity, eclosion behavior, and for the rhythmic component of the male courtship song that originates in the thoracic nervous system. The biological cycle depends on the rhythmic formation and nuclear localization of the TIM-PER complex. Light induces the degradation of TIM, which promotes elimination of PER. Nuclear activity of the heterodimer coordinatively regulates PER and TIM transcription through a negative feedback loop. Behaves as a negative element in circadian transcriptional loop. Does not appear to bind DNA, suggesting indirect transcriptional inhibition. The sequence is that of Period circadian protein (per) from Drosophila yakuba (Fruit fly).